We begin with the raw amino-acid sequence, 378 residues long: Alpha-galactosidase (378 aa).

Positions 1–15 are cleaved as a signal peptide; the sequence is MVKSPGTEDYTRRSL. 2 disulfides stabilise this stretch: cysteine 36–cysteine 68 and cysteine 116–cysteine 147. Aspartate 145 serves as the catalytic Nucleophile. 178-182 serves as a coordination point for substrate; the sequence is EWGEE. The active-site Proton donor is aspartate 200.

This sequence belongs to the glycosyl hydrolase 27 family.

The catalysed reaction is Hydrolysis of terminal, non-reducing alpha-D-galactose residues in alpha-D-galactosides, including galactose oligosaccharides, galactomannans and galactolipids.. Preferentially cleaves alpha-1,3 and alpha-1,4 glycoside linkages. Involved in the hydrolysis of the galactomannan, it splits alpha-linked galactose moieties. It is particularly suitable for the hydrolysis of guar gum to a gum with improved gelling properties. Can cleave terminal alpha-1,3-linked galactose residues responsible for blood group B specificity from the surface of erythrocytes thereby converting these cells serologically to group O. In Coffea arabica (Arabian coffee), this protein is Alpha-galactosidase.